The chain runs to 709 residues: Leucine-rich repeat-containing protein 4B (709 aa).

Positions Met1–Ala38 are cleaved as a signal peptide. The region spanning Gly50–Val88 is the LRRNT domain. LRR repeat units follow at residues Asn89–His110, His113–Gly134, Ser137–Tyr158, Lys161–Arg182, Ser185–Gly207, Asn210–Val231, Arg232–Gly253, Ser256–Asp277, and Ser280–Pro301. Asn226 carries N-linked (GlcNAc...) asparagine glycosylation. 8 N-linked (GlcNAc...) asparagine glycosylation sites follow: Asn285, Asn335, Asn376, Asn402, Asn424, Asn427, Asn446, and Asn454. Residues Asn313–Ala365 enclose the LRRCT domain. The 89-residue stretch at Pro366–Asn454 folds into the Ig-like C2-type domain. An intrachain disulfide couples Cys387 to Cys438. The tract at residues Thr496–Thr552 is disordered. Low complexity predominate over residues Ala528–Ser544. The chain crosses the membrane as a helical span at residues Ile575–Tyr595. A Phosphoserine modification is found at Ser689.

In terms of assembly, interacts with PTPRF. Interacts with DLG4. Post-translationally, N-glycosylated. O-glycosylated; contains sialic acid.

The protein resides in the membrane. Its subcellular location is the presynaptic cell membrane. Synaptic adhesion protein. Regulates the formation of excitatory synapses. The trans-synaptic adhesion between LRRC4B and PTPRF regulates the formation of excitatory synapses in a bidirectional manner. The protein is Leucine-rich repeat-containing protein 4B (Lrrc4b) of Mus musculus (Mouse).